The chain runs to 461 residues: Trigger factor (461 aa).

Residues 169-256 (GDTAVIDFAG…LKDLKIKELP (88 aa)) form the PPIase FKBP-type domain. The interval 432–461 (PGEAIEPGSGEDAPPEVAAGATEPEAQPNS) is disordered.

It belongs to the FKBP-type PPIase family. Tig subfamily.

The protein localises to the cytoplasm. It catalyses the reaction [protein]-peptidylproline (omega=180) = [protein]-peptidylproline (omega=0). Functionally, involved in protein export. Acts as a chaperone by maintaining the newly synthesized protein in an open conformation. Functions as a peptidyl-prolyl cis-trans isomerase. In Gloeobacter violaceus (strain ATCC 29082 / PCC 7421), this protein is Trigger factor.